Consider the following 314-residue polypeptide: Transmembrane protein 178B (314 aa).

An N-terminal signal peptide occupies residues 1–24 (MRLLAGAGLCLALAALALLAVALS). The interval 32–83 (DARRHRDRCRKPGGKRNDPGYMYTPGQHLPLRGEPPSSRIRSPRGGEPGGVR) is disordered. Over residues 36–45 (HRDRCRKPGG) the composition is skewed to basic residues. 3 helical membrane passes run 194 to 214 (AGFI…GVLG), 228 to 248 (LLFL…VAGI), and 274 to 294 (MFCA…CTLA).

The protein belongs to the TMEM178 family.

The protein resides in the membrane. In Xenopus tropicalis (Western clawed frog), this protein is Transmembrane protein 178B (tmem178b).